A 389-amino-acid chain; its full sequence is Type 2 DNA topoisomerase 6 subunit A (389 aa).

The Topo IIA-type catalytic domain occupies 12–162 (EARRKAANIL…MLILSKEKGK (151 aa)). Tyr106 functions as the O-(5'-phospho-DNA)-tyrosine intermediate in the catalytic mechanism. Glu209 and Asp261 together coordinate Mg(2+).

It belongs to the TOP6A family. In terms of assembly, homodimer. Heterotetramer of two Top6A and two Top6B chains. Requires Mg(2+) as cofactor.

It carries out the reaction ATP-dependent breakage, passage and rejoining of double-stranded DNA.. Its activity is regulated as follows. Not inhibited by the DNA gyrase inhibitor novobiocin, instead inhibited by eukaryotic topoisomerase inhibitors such as m- and o-amsacrine, ellipticine, and the quinolone CP-115,953. Functionally, relaxes both positive and negative supercoils and exhibits a strong decatenase and unknotting activity; it cannot introduce DNA supercoils. ATP is absolutely required for DNA cleavage; the nonhydrolyzable analog AMP-PNP generates nicked or linear products from a supercoiled dsDNA substrate. Generates staggered two-nucleotide long 5' overhangs. The enzyme is covalently attached transiently to the 5'-ends of the cleaved strands. This chain is Type 2 DNA topoisomerase 6 subunit A, found in Saccharolobus shibatae (strain ATCC 51178 / DSM 5389 / JCM 8931 / NBRC 15437 / B12) (Sulfolobus shibatae).